Consider the following 618-residue polypeptide: C2H2 finger domain transcription factor sebA (618 aa).

The interval 394-488 (GDATQSTEEM…RGRKQSLTDD (95 aa)) is disordered. Over residues 406 to 416 (KKRVTSRRSLK) the composition is skewed to basic residues. Composition is skewed to low complexity over residues 417–432 (KAST…AKKT) and 443–458 (SDTT…SSRQ). Residues 459 to 469 (NSTANTSNSES) show a composition bias toward polar residues. 2 consecutive C2H2-type zinc fingers follow at residues 493-516 (FVCS…RSLH) and 522-544 (FECH…ARTH). Positions 582–597 (NAATSKSTTSESSDGT) are enriched in low complexity. A disordered region spans residues 582–618 (NAATSKSTTSESSDGTISDTSSVGGRPAKKRRRDDHV). The span at 608-618 (PAKKRRRDDHV) shows a compositional bias: basic residues.

It localises to the nucleus. Its subcellular location is the cytoplasm. In terms of biological role, transcription factor that is involved in the response to heat shock, oxidative stress, and poor nutrient conditions. Controls expression of oxidative stress response genes such as ccp1, cat1, cat2, sod2; as well as of heat shock genes such as hsf1, hsp30 and hsp90. Negatively controls the expression of the fumiquinazoline (fmq) cluster via binding to the STRE motifs at the fmqA-D promoters. Plays a role in virulence. This chain is C2H2 finger domain transcription factor sebA, found in Aspergillus fumigatus (strain ATCC MYA-4609 / CBS 101355 / FGSC A1100 / Af293) (Neosartorya fumigata).